The primary structure comprises 394 residues: Na(+)/H(+) antiporter NhaA (394 aa).

Transmembrane regions (helical) follow at residues Ala14–Leu34, Leu59–Val79, Val95–Phe115, Gly125–Gly145, Val154–Phe174, Val179–Trp199, Leu213–Val233, Gly254–Val274, Ile292–Val312, Ile328–Leu348, and Leu363–Val383.

Belongs to the NhaA Na(+)/H(+) (TC 2.A.33) antiporter family.

The protein resides in the cell inner membrane. It carries out the reaction Na(+)(in) + 2 H(+)(out) = Na(+)(out) + 2 H(+)(in). In terms of biological role, na(+)/H(+) antiporter that extrudes sodium in exchange for external protons. This is Na(+)/H(+) antiporter NhaA from Yersinia pseudotuberculosis serotype O:1b (strain IP 31758).